The following is a 614-amino-acid chain: Fimbrin (614 aa).

2 consecutive EF-hand domains span residues 16–50 and 51–86; these read EEILTLTDQFNKLDVDGKGYLDQPTTIKAFEDSKK and GSYDEVREAIREVNVDSSGRVEPEDFVGIFNVLKKG. Asp-29, Asp-31, Tyr-35, Thr-40, Asp-66, Ser-68, Arg-70, and Asp-75 together coordinate Ca(2+). Actin-binding stretches follow at residues 98 to 368 and 369 to 614; these read TIKG…GLEP and LNEE…LMAV. Calponin-homology (CH) domains are found at residues 112–233, 261–364, 385–495, and 508–614; these read EEER…RRGL, LPPE…NTHP, EREA…RMNI, and TLSD…LMAV.

It localises to the cytoplasm. The protein localises to the cytoskeleton. Its subcellular location is the actin patch. In terms of biological role, binds to actin, and functionally associates with actin structures involved in the development and maintenance of cell polarity. Plays a role in cytokinesis. Plays important roles in mating and in spore formation. The sequence is that of Fimbrin (fim1) from Schizosaccharomyces pombe (strain 972 / ATCC 24843) (Fission yeast).